The sequence spans 327 residues: Serine/threonine-protein phosphatase PP1-beta catalytic subunit (327 aa).

N-acetylalanine is present on A2. The Mn(2+) site is built by D63, H65, D91, and N123. Residue H124 is the Proton donor of the active site. Residues H172 and H247 each contribute to the Mn(2+) site. Positions 305–327 (QYGGLNSGRPVTPPRTANPPKKR) are disordered.

Belongs to the PPP phosphatase family. PP-1 subfamily. Mn(2+) serves as cofactor.

The protein localises to the cytoplasm. It is found in the nucleus. It carries out the reaction O-phospho-L-seryl-[protein] + H2O = L-seryl-[protein] + phosphate. It catalyses the reaction O-phospho-L-threonyl-[protein] + H2O = L-threonyl-[protein] + phosphate. In terms of biological role, protein phosphatase that associates with over 200 regulatory proteins to form highly specific holoenzymes which dephosphorylate hundreds of biological targets. Protein phosphatase (PP1) is essential for cell division, it participates in the regulation of glycogen metabolism, muscle contractility and protein synthesis. Involved in regulation of ionic conductances and long-term synaptic plasticity. In Xenopus laevis (African clawed frog), this protein is Serine/threonine-protein phosphatase PP1-beta catalytic subunit (ppp1cb).